The chain runs to 2610 residues: E3 ubiquitin-protein ligase HECTD1 (2610 aa).

Residues 246–269 are disordered; the sequence is TVSGPSSACKPGRSTTGAPSTTAD. The segment covering 258-269 has biased composition (polar residues); that stretch reads RSTTGAPSTTAD. 4 ANK repeats span residues 395 to 424, 426 to 455, 459 to 491, and 579 to 612; these read VGQT…DVNR, QRSS…NPDL, DGKT…PVNK, and ITAT…DIFL. The interval 489–513 is disordered; sequence VNKGDDKKKKDTNKDEEECNEPKGD. Basic and acidic residues predominate over residues 491 to 501; that stretch reads KGDDKKKKDTN. Disordered stretches follow at residues 627–657 and 707–748; these read LAGP…ELQQ and SSGS…LSAP. 2 positions are modified to phosphoserine: S631 and S640. The span at 639-657 shows a compositional bias: basic and acidic residues; the sequence is ESKPEKEDEPQEDAKELQQ. A compositionally biased stretch (low complexity) spans 707–717; sequence SSGSPEGGSDS. Basic and acidic residues predominate over residues 718–729; that stretch reads SESRSEFLEKLQ. Residues 1266–1338 form the MIB/HERC2 domain; the sequence is VRSQVLKYMV…KFDLKLAPGY (73 aa). 2 disordered regions span residues 1343–1406 and 1433–1483; these read VASP…KTER and ENVP…SMGI. Positions 1348–1365 are enriched in polar residues; the sequence is PVSSTVSGTTQSWSSLVK. Composition is skewed to low complexity over residues 1373–1395 and 1441–1458; these read SAAA…ASSS and GSSS…TGSE. S1384 carries the phosphoserine modification. A compositionally biased stretch (polar residues) spans 1469-1479; that stretch reads SVRTPGESSAI. A Phosphoserine modification is found at S1488. The disordered stretch occupies residues 1496 to 1515; that stretch reads ELTNKEAASQRPLSSSASNR. S1567 bears the Phosphoserine mark. Disordered regions lie at residues 1592–1611 and 1674–1757; these read GAQS…VTMS and ELDD…KGGR. Low complexity predominate over residues 1600–1611; sequence TTPGTTSTVTMS. A compositionally biased stretch (acidic residues) spans 1674 to 1703; that stretch reads ELDDDEDLPEPDEEDDENEDDNQEDQEYEE. Position 1760 is a phosphothreonine (T1760). S1772 is subject to Phosphoserine. Positions 1777–1797 are disordered; that stretch reads AFDPRPGRTNVQQTTDLEIPP. The K-box stretch occupies residues 2029-2103; the sequence is FTFPPDEFTS…AIVWLQNRRE (75 aa). The HECT domain maps to 2151–2610; sequence IHADRKSVLE…ATMEKGFHLN (460 aa). The segment at 2297–2318 is disordered; the sequence is HCTESQSEASTEEGHDSLSVGS. A Phosphoserine modification is found at S2318. Residue C2579 is the Glycyl thioester intermediate of the active site.

Belongs to the UPL family. K-HECT subfamily. Interacts with IGSF1.

The enzyme catalyses S-ubiquitinyl-[E2 ubiquitin-conjugating enzyme]-L-cysteine + [acceptor protein]-L-lysine = [E2 ubiquitin-conjugating enzyme]-L-cysteine + N(6)-ubiquitinyl-[acceptor protein]-L-lysine.. The protein operates within protein modification; protein ubiquitination. Its function is as follows. E3 ubiquitin-protein ligase which accepts ubiquitin from an E2 ubiquitin-conjugating enzyme in the form of a thioester and then directly transfers the ubiquitin to targeted substrates. Mediates 'Lys-63'-linked polyubiquitination of HSP90AA1 which leads to its intracellular localization and reduced secretion. Negatively regulating HSP90AA1 secretion in cranial mesenchyme cells may impair their emigration and may be essential for the correct development of the cranial neural folds and neural tube closure. Catalyzes ubiquitination and degradation of ZNF622, an assembly factor for the ribosomal 60S subunit, in hematopoietic cells, thereby promoting hematopoietic stem cell renewal. The protein is E3 ubiquitin-protein ligase HECTD1 of Homo sapiens (Human).